Consider the following 172-residue polypeptide: Auxin-responsive protein IAA30 (172 aa).

Residues 1-18 (MGRGRSSSSSSIESSCKS) show a composition bias toward low complexity. The tract at residues 1 to 28 (MGRGRSSSSSSIESSCKSNPFGVSSSNT) is disordered. Positions 35 to 39 (LRLGL) match the EAR-like (transcriptional repression) motif. Residues 82–171 (SFYVKVNMEG…RRLKISRAYH (90 aa)) enclose the PB1 domain.

This sequence belongs to the Aux/IAA family. In terms of assembly, homodimers and heterodimers.

Its subcellular location is the nucleus. Aux/IAA proteins are short-lived transcriptional factors that function as repressors of early auxin response genes at low auxin concentrations. Repression is thought to result from the interaction with auxin response factors (ARFs), proteins that bind to the auxin-responsive promoter element (AuxRE). Formation of heterodimers with ARF proteins may alter their ability to modulate early auxin response genes expression. This is Auxin-responsive protein IAA30 (IAA30) from Arabidopsis thaliana (Mouse-ear cress).